Consider the following 430-residue polypeptide: Enolase (430 aa).

Gln-167 lines the (2R)-2-phosphoglycerate pocket. Glu-209 acts as the Proton donor in catalysis. Asp-246, Glu-287, and Asp-314 together coordinate Mg(2+). Positions 339, 368, 369, and 390 each coordinate (2R)-2-phosphoglycerate. Catalysis depends on Lys-339, which acts as the Proton acceptor.

It belongs to the enolase family. It depends on Mg(2+) as a cofactor.

It is found in the cytoplasm. The protein localises to the secreted. The protein resides in the cell surface. It catalyses the reaction (2R)-2-phosphoglycerate = phosphoenolpyruvate + H2O. It participates in carbohydrate degradation; glycolysis; pyruvate from D-glyceraldehyde 3-phosphate: step 4/5. Its function is as follows. Catalyzes the reversible conversion of 2-phosphoglycerate (2-PG) into phosphoenolpyruvate (PEP). It is essential for the degradation of carbohydrates via glycolysis. The polypeptide is Enolase (Prochlorococcus marinus (strain MIT 9301)).